A 302-amino-acid chain; its full sequence is Acetaldehyde dehydrogenase 1 (302 aa).

Position 12-15 (12-15 (SGNI)) interacts with NAD(+). The active-site Acyl-thioester intermediate is the Cys127. NAD(+)-binding positions include 158 to 166 (SAGPGTRAN) and Asn277.

It belongs to the acetaldehyde dehydrogenase family.

It carries out the reaction acetaldehyde + NAD(+) + CoA = acetyl-CoA + NADH + H(+). The sequence is that of Acetaldehyde dehydrogenase 1 from Mycobacteroides abscessus (strain ATCC 19977 / DSM 44196 / CCUG 20993 / CIP 104536 / JCM 13569 / NCTC 13031 / TMC 1543 / L948) (Mycobacterium abscessus).